Consider the following 353-residue polypeptide: Adenine deaminase (353 aa).

Residues His19, His21, and His208 each coordinate Zn(2+). Residue Glu211 is the Proton donor of the active site. Position 289 (Asp289) interacts with Zn(2+). Position 290 (Asp290) interacts with substrate.

This sequence belongs to the metallo-dependent hydrolases superfamily. Adenosine and AMP deaminases family. Adenine deaminase type 2 subfamily. Zn(2+) serves as cofactor.

It localises to the cytoplasm. The protein resides in the nucleus. It catalyses the reaction adenine + H2O + H(+) = hypoxanthine + NH4(+). Catalyzes the hydrolytic deamination of adenine to hypoxanthine. Plays an important role in the purine salvage pathway and in nitrogen catabolism. The protein is Adenine deaminase of Gibberella zeae (strain ATCC MYA-4620 / CBS 123657 / FGSC 9075 / NRRL 31084 / PH-1) (Wheat head blight fungus).